The primary structure comprises 100 residues: Urease subunit gamma (100 aa).

It belongs to the urease gamma subunit family. As to quaternary structure, heterotrimer of UreA (gamma), UreB (beta) and UreC (alpha) subunits. Three heterotrimers associate to form the active enzyme.

The protein resides in the cytoplasm. It carries out the reaction urea + 2 H2O + H(+) = hydrogencarbonate + 2 NH4(+). The protein operates within nitrogen metabolism; urea degradation; CO(2) and NH(3) from urea (urease route): step 1/1. The protein is Urease subunit gamma of Pseudomonas aeruginosa (strain LESB58).